The chain runs to 459 residues: 3-carboxy-cis,cis-muconate cycloisomerase (459 aa).

Belongs to the class-II fumarase/aspartase family. As to quaternary structure, homotetramer.

It is found in the cytoplasm. The enzyme catalyses 2-(carboxymethyl)-5-oxo-2,5-dihydro-2-furoate = 3-carboxy-cis,cis-muconate + H(+). It participates in aromatic compound metabolism; beta-ketoadipate pathway; 5-oxo-4,5-dihydro-2-furylacetate from 3-carboxy-cis,cis-muconate: step 1/2. In terms of biological role, catalyzes an anti cycloisomerization. In Pseudomonas aeruginosa (strain ATCC 15692 / DSM 22644 / CIP 104116 / JCM 14847 / LMG 12228 / 1C / PRS 101 / PAO1), this protein is 3-carboxy-cis,cis-muconate cycloisomerase (pcaB).